A 397-amino-acid polypeptide reads, in one-letter code: Nuclear RNA export factor 5 (397 aa).

The region spanning 13 to 92 is the RRM domain; sequence WFKVTIPYGI…IFVSHFTAPY (80 aa). 4 LRR repeats span residues 160–185, 186–209, 210–237, and 238–265; these read ELLS…EKAP, KVKT…VKGL, KLEE…AIRD, and CFPK…ETMK. One can recognise an NTF2; truncated domain in the interval 280–367; sequence LVLQFLQQSN…ESQRWWCLLS (88 aa).

This sequence belongs to the NXF family. In terms of assembly, interacts with NXT1 and NXT2.

The protein localises to the cytoplasm. It localises to the nucleus. Its function is as follows. Could be involved in the export of mRNA from the nucleus to the cytoplasm. Could also have a role in polarized cytoplasmic transport and localization of mRNA in neurons. The sequence is that of Nuclear RNA export factor 5 (NXF5) from Homo sapiens (Human).